The primary structure comprises 116 residues: Large ribosomal subunit protein uL22c (116 aa).

This sequence belongs to the universal ribosomal protein uL22 family. In terms of assembly, part of the 50S ribosomal subunit.

The protein resides in the plastid. It localises to the chloroplast. In terms of biological role, this protein binds specifically to 23S rRNA. Functionally, the globular domain of the protein is located near the polypeptide exit tunnel on the outside of the subunit, while an extended beta-hairpin is found that lines the wall of the exit tunnel in the center of the 70S ribosome. The sequence is that of Large ribosomal subunit protein uL22c (rpl22) from Psilotum nudum (Whisk fern).